The following is a 453-amino-acid chain: G-protein coupled receptor 39 (453 aa).

Residues methionine 1–isoleucine 34 are Extracellular-facing. 2 disulfides stabilise this stretch: cysteine 11–cysteine 191 and cysteine 108–cysteine 210. Residues histidine 17 and histidine 19 each contribute to the Zn(2+) site. A helical transmembrane segment spans residues leucine 35–threonine 55. At glutamine 56 to threonine 69 the chain is on the cytoplasmic side. A helical transmembrane segment spans residues aspartate 70 to methionine 89. The Extracellular segment spans residues glutamate 90–lysine 109. Residues leucine 110 to phenylalanine 131 form a helical membrane-spanning segment. At glutamate 132–glutamine 151 the chain is on the cytoplasmic side. The chain crosses the membrane as a helical span at residues valine 152–phenylalanine 172. At alanine 173–tryptophan 217 the chain is on the extracellular side. Asparagine 192, asparagine 206, and asparagine 212 each carry an N-linked (GlcNAc...) asparagine glycan. A helical membrane pass occupies residues threonine 218 to cysteine 242. Residues tryptophan 243–isoleucine 283 are Cytoplasmic-facing. The disordered stretch occupies residues glycine 255–serine 274. A helical transmembrane segment spans residues phenylalanine 284–methionine 305. The Extracellular portion of the chain corresponds to alanine 306 to methionine 323. Residues isoleucine 324–tyrosine 344 traverse the membrane as a helical segment. The Cytoplasmic segment spans residues threonine 345–valine 453. The residue at position 396 (serine 396) is a Phosphoserine. Residues serine 415–valine 453 are disordered. Positions glutamate 418–serine 435 are enriched in low complexity.

Belongs to the G-protein coupled receptor 1 family. Interacts with HTR1A. Interacts with GALR1. As to expression, expressed in many tissues, including the stomach, intestine and hypothalamus.

Its subcellular location is the cell membrane. Its function is as follows. Zinc-sensing receptor that can sense changes in extracellular Zn(2+), mediate Zn(2+) signal transmission, and participates in the regulation of numerous physiological processes including glucose homeostasis regulation, gastrointestinal mobility, hormone secretion and cell death. Activation by Zn(2+) in keratinocytes increases the intracellular concentration of Ca(2+) and activates the ERK/MAPK and PI3K/AKT signaling pathways leading to epithelial repair. Plays an essential role in normal wound healing by inducing the production of cytokines including the major inflammatory cytokine IL6 via the PKC/MAPK/CEBPB pathway. Regulates adipose tissue metabolism, especially lipolysis, and regulates the function of lipases, such as hormone-sensitive lipase and adipose triglyceride lipase. Plays a role in the inhibition of cell death and protects against oxidative, endoplasmic reticulum and mitochondrial stress by inducing secretion of the cytoprotective pigment epithelium-derived growth factor (PEDF) and probably other protective transcripts in a GNA13/RHOA/SRE-dependent manner. Forms dynamic heteroreceptor complexes with HTR1A and GALR1 depending on cell type or specific physiological states, resulting in signaling diversity: HTR1A-GPR39 shows additive increase in signaling along the serum response element (SRE) and NF-kappa-B pathways while GALR1 acts as an antagonist blocking SRE. In Homo sapiens (Human), this protein is G-protein coupled receptor 39 (GPR39).